A 478-amino-acid chain; its full sequence is Spindle defective protein 3 (478 aa).

At 1-24 (MDQMTVEEKILEHQELEDGSSSFR) the chain is on the cytoplasmic side. The helical transmembrane segment at 25 to 45 (WLVSSTVIAIGGATVALYISG) threads the bilayer. Residues 46–52 (KIDWKIP) are Extracellular-facing. A helical membrane pass occupies residues 53–73 (AIEAGLALTAGGTITCGYLWF). Topologically, residues 74-478 (KKRVKTVRKL…LRRVDDDIIE (405 aa)) are cytoplasmic.

It localises to the mitochondrion. Its subcellular location is the mitochondrion outer membrane. In terms of biological role, in the first mitotic division in embryos, required for mitotic spindle alignment and asymmetric cell division. Required for motor-driven chromosome movement and homolog searching within the nucleus, and subsequently ensures homologous chromosome pairing during the prophase stage of meiosis. The sequence is that of Spindle defective protein 3 from Caenorhabditis elegans.